Here is a 372-residue protein sequence, read N- to C-terminus: Histidinol-phosphate aminotransferase (372 aa).

At K230 the chain carries N6-(pyridoxal phosphate)lysine.

It belongs to the class-II pyridoxal-phosphate-dependent aminotransferase family. Histidinol-phosphate aminotransferase subfamily. As to quaternary structure, homodimer. The cofactor is pyridoxal 5'-phosphate.

The enzyme catalyses L-histidinol phosphate + 2-oxoglutarate = 3-(imidazol-4-yl)-2-oxopropyl phosphate + L-glutamate. It participates in amino-acid biosynthesis; L-histidine biosynthesis; L-histidine from 5-phospho-alpha-D-ribose 1-diphosphate: step 7/9. This is Histidinol-phosphate aminotransferase from Paenarthrobacter aurescens (strain TC1).